A 194-amino-acid chain; its full sequence is Crossover junction endodeoxyribonuclease RuvC (194 aa).

Residues Asp-7, Glu-68, and Asp-141 contribute to the active site. Mg(2+) is bound by residues Asp-7, Glu-68, and Asp-141.

It belongs to the RuvC family. As to quaternary structure, homodimer which binds Holliday junction (HJ) DNA. The HJ becomes 2-fold symmetrical on binding to RuvC with unstacked arms; it has a different conformation from HJ DNA in complex with RuvA. In the full resolvosome a probable DNA-RuvA(4)-RuvB(12)-RuvC(2) complex forms which resolves the HJ. It depends on Mg(2+) as a cofactor.

It localises to the cytoplasm. The catalysed reaction is Endonucleolytic cleavage at a junction such as a reciprocal single-stranded crossover between two homologous DNA duplexes (Holliday junction).. In terms of biological role, the RuvA-RuvB-RuvC complex processes Holliday junction (HJ) DNA during genetic recombination and DNA repair. Endonuclease that resolves HJ intermediates. Cleaves cruciform DNA by making single-stranded nicks across the HJ at symmetrical positions within the homologous arms, yielding a 5'-phosphate and a 3'-hydroxyl group; requires a central core of homology in the junction. The consensus cleavage sequence is 5'-(A/T)TT(C/G)-3'. Cleavage occurs on the 3'-side of the TT dinucleotide at the point of strand exchange. HJ branch migration catalyzed by RuvA-RuvB allows RuvC to scan DNA until it finds its consensus sequence, where it cleaves and resolves the cruciform DNA. The sequence is that of Crossover junction endodeoxyribonuclease RuvC from Bifidobacterium longum (strain DJO10A).